The primary structure comprises 335 residues: Eukaryotic translation initiation factor 3 subunit H-A (335 aa).

The region spanning 22–156 is the MPN domain; the sequence is IQVDGLVVLK…LKAYRLTPKL (135 aa). Low complexity predominate over residues 254-272; sequence QQQKQQYQQRRQQENAQRQ. Residues 254-282 are disordered; sequence QQQKQQYQQRRQQENAQRQSRGEPPLPEE.

It belongs to the eIF-3 subunit H family. In terms of assembly, component of the eukaryotic translation initiation factor 3 (eIF-3) complex, which is composed of 13 subunits: eif3a, eif3b, eif3c, eif3d, eif3e, eif3f, eif3g, eif3h, eif3i, eif3j, eif3k, eif3l and eif3m.

The protein localises to the cytoplasm. In terms of biological role, component of the eukaryotic translation initiation factor 3 (eIF-3) complex, which is involved in protein synthesis of a specialized repertoire of mRNAs and, together with other initiation factors, stimulates binding of mRNA and methionyl-tRNAi to the 40S ribosome. The eIF-3 complex specifically targets and initiates translation of a subset of mRNAs involved in cell proliferation. This is Eukaryotic translation initiation factor 3 subunit H-A (eif3ha) from Danio rerio (Zebrafish).